A 244-amino-acid polypeptide reads, in one-letter code: MDLGLAGRRALVTGAGKGIGRSTVLALQAAGAHVVAVSRTQADLDSLVSECPGVETVCVDLADWEATEQALSSVGPVDLLVNNAAVALLQPFLEVTKEAFDMSFNVNLRAVIQVSQIVARGMIARGAPGAIVNVSSQASQRALANHSVYCSTKGALDMLTKMMALELGPHKIRVNAVNPTVVMTSMGRTNWSDPHKAKVMLDRIPLGKFAEVENVVDAILFLLSHRSNMTTGSTLPVDGGFLVT.

Met1 is subject to N-acetylmethionine. Residue 11-39 participates in NADP(+) binding; the sequence is LVTGAGKGIGRSTVLALQAAGAHVVAVSR. Arg21 carries the post-translational modification Omega-N-methylarginine. Ser46 bears the Phosphoserine mark. Ser136 contacts substrate. Residue Tyr149 is the Proton acceptor of the active site. Lys153 is an active-site residue.

Belongs to the short-chain dehydrogenases/reductases (SDR) family. Homotetramer. As to expression, highly expressed in kidney and liver. Expressed in epididymis. Weakly expressed in brain, heart, lung, spleen and testis.

The protein resides in the membrane. The protein localises to the cytoplasmic vesicle. It localises to the secretory vesicle. Its subcellular location is the acrosome. The enzyme catalyses xylitol + NADP(+) = L-xylulose + NADPH + H(+). Functionally, catalyzes the NADPH-dependent reduction of several pentoses, tetroses, trioses, alpha-dicarbonyl compounds and L-xylulose. Participates in the uronate cycle of glucose metabolism. May play a role in the water absorption and cellular osmoregulation in the proximal renal tubules by producing xylitol, an osmolyte, thereby preventing osmolytic stress from occurring in the renal tubules. This Mesocricetus auratus (Golden hamster) protein is L-xylulose reductase (DCXR).